A 123-amino-acid polypeptide reads, in one-letter code: Small ribosomal subunit protein uS13 (123 aa).

The tract at residues 94-123 (GLPVRGQSTKSNARTRKGPRKTVAGKKSTK) is disordered. Residues 106-123 (ARTRKGPRKTVAGKKSTK) are compositionally biased toward basic residues.

It belongs to the universal ribosomal protein uS13 family. As to quaternary structure, part of the 30S ribosomal subunit. Forms a loose heterodimer with protein S19. Forms two bridges to the 50S subunit in the 70S ribosome.

Located at the top of the head of the 30S subunit, it contacts several helices of the 16S rRNA. In the 70S ribosome it contacts the 23S rRNA (bridge B1a) and protein L5 of the 50S subunit (bridge B1b), connecting the 2 subunits; these bridges are implicated in subunit movement. Contacts the tRNAs in the A and P-sites. The chain is Small ribosomal subunit protein uS13 from Mycoplasmopsis agalactiae (strain NCTC 10123 / CIP 59.7 / PG2) (Mycoplasma agalactiae).